A 579-amino-acid polypeptide reads, in one-letter code: PCNA-interacting partner (579 aa).

A disordered region spans residues 480-543; it reads TSFGNVHLDR…AKIPKKSNDS (64 aa). The segment covering 486–496 has biased composition (basic and acidic residues); the sequence is HLDRSKNEKVS.

The protein belongs to the PARI family. Interacts with RAD51 and PCNA. Interacts with PARP1. Interacts with TASOR. In terms of tissue distribution, restricted to testis. Overexpressed in multiple cancer cells.

The protein resides in the cytoplasm. The protein localises to the nucleus. Its function is as follows. Required to suppress inappropriate homologous recombination, thereby playing a central role DNA repair and in the maintenance of genomic stability. Antagonizes homologous recombination by interfering with the formation of the RAD51-DNA homologous recombination structure. Binds single-strand DNA and poly(A) homopolymers. Positively regulate the poly(ADP-ribosyl)ation activity of PARP1; however such function may be indirect. In Homo sapiens (Human), this protein is PCNA-interacting partner (PARPBP).